A 365-amino-acid chain; its full sequence is Phosphate acyltransferase (365 aa).

This sequence belongs to the PlsX family. As to quaternary structure, homodimer. Probably interacts with PlsY.

The protein localises to the cytoplasm. It carries out the reaction a fatty acyl-[ACP] + phosphate = an acyl phosphate + holo-[ACP]. It participates in lipid metabolism; phospholipid metabolism. Functionally, catalyzes the reversible formation of acyl-phosphate (acyl-PO(4)) from acyl-[acyl-carrier-protein] (acyl-ACP). This enzyme utilizes acyl-ACP as fatty acyl donor, but not acyl-CoA. This is Phosphate acyltransferase from Klebsiella pneumoniae (strain 342).